A 66-amino-acid polypeptide reads, in one-letter code: UPF0337 protein BA_0987/GBAA_0987/BAS0923 (66 aa).

The interval 1–22 is disordered; it reads MSESGLKEQITGKVEKTKGQVK. Residues 13 to 22 are compositionally biased toward basic and acidic residues; the sequence is KVEKTKGQVK.

This sequence belongs to the UPF0337 (CsbD) family.

In Bacillus anthracis, this protein is UPF0337 protein BA_0987/GBAA_0987/BAS0923.